The primary structure comprises 586 residues: Frizzled-10-A (586 aa).

Residues 1–26 form the signal peptide; sequence MDVSGVTGLLRGTALLLVLAAALCSA. Topologically, residues 27–230 are extracellular; sequence ISSINPDRSG…DVYWSKDDKK (204 aa). Residues 35-156 enclose the FZ domain; that stretch reads SGDGRCQAIE…NDPNYLCMEA (122 aa). 5 disulfide bridges follow: C40/C101, C48/C94, C85/C123, C112/C153, and C116/C140. A glycan (N-linked (GlcNAc...) asparagine) is linked at N54. Residue N159 is glycosylated (N-linked (GlcNAc...) asparagine). A disordered region spans residues 161–199; sequence TDETPRGSSMLPPIFRPQRPSSGHEIYPKDPTSRSSCEN. Residues 231–251 traverse the membrane as a helical segment; it reads FAFIWIAIWSILCFFSSAFTV. Residues 252-267 lie on the Cytoplasmic side of the membrane; that stretch reads LTFLVDPLRFKYPERP. A helical transmembrane segment spans residues 268 to 288; it reads IIFLSMCYCVYSVGYIIRLFA. The Extracellular segment spans residues 289–315; it reads GADSIACDRDSGQLYVIQEGLESTGCT. Residues 316–336 form a helical membrane-spanning segment; it reads IVFLILYYFGMASSLWWVILT. Residues 337 to 356 are Cytoplasmic-facing; that stretch reads LTWFLAAGKKWGHEAIEANS. A helical transmembrane segment spans residues 357–377; the sequence is SYFHLAAWAIPAVKTIMILVM. Topologically, residues 378 to 401 are extracellular; the sequence is RRVAGDELTGVCYVGSMDVNALTG. A helical membrane pass occupies residues 402–422; sequence FVLIPLACYLIIGTSFILSGF. Residues 423–448 are Cytoplasmic-facing; that stretch reads VALFHIRRVMKTGGENTDKLEKLMVR. The helical transmembrane segment at 449-469 threads the bilayer; sequence IGVFSVLYTVPATCVIACYFY. The Extracellular segment spans residues 470-507; sequence ERLNMDFWKILATQDKCKMDSQTKTLDCTMTSSIPAVE. The helical transmembrane segment at 508 to 528 threads the bilayer; the sequence is IFMVKIFMLLVVGITSGMWIW. Residues 529 to 586 are Cytoplasmic-facing; that stretch reads TSKTVQSWQNVFSKRLKKRNRSKPASVITSAGIYKKPQHPPKVHHGKYESALQSPTCV. The Lys-Thr-X-X-X-Trp motif, mediates interaction with the PDZ domain of Dvl family members signature appears at 531 to 536; sequence KTVQSW. Residues 563–586 form a disordered region; that stretch reads KKPQHPPKVHHGKYESALQSPTCV. A compositionally biased stretch (basic residues) spans 564–573; the sequence is KPQHPPKVHH. Positions 584-586 match the PDZ-binding motif; the sequence is TCV.

Belongs to the G-protein coupled receptor Fz/Smo family. As to expression, expressed in liver, lung, brain, testis, stomach, kidney, eye, skeletal muscle and skin.

Its subcellular location is the cell membrane. Receptor for Wnt proteins. Most of frizzled receptors are coupled to the beta-catenin canonical signaling pathway, which leads to the activation of disheveled proteins, inhibition of GSK-3 kinase, nuclear accumulation of beta-catenin and activation of Wnt target genes. A second signaling pathway involving PKC and calcium fluxes has been seen for some family members, but it is not yet clear if it represents a distinct pathway or if it can be integrated in the canonical pathway, as PKC seems to be required for Wnt-mediated inactivation of GSK-3 kinase. Both pathways seem to involve interactions with G-proteins. May be involved in transduction and intercellular transmission of polarity information during tissue morphogenesis and/or in differentiated tissues. Activated by Wnt8. Could have an antagonizing activity in the morphogenesis during development. The sequence is that of Frizzled-10-A (fzd10-a) from Xenopus laevis (African clawed frog).